The primary structure comprises 504 residues: ATP synthase subunit alpha (504 aa).

169–176 (GDRQTGKT) is a binding site for ATP.

It belongs to the ATPase alpha/beta chains family. As to quaternary structure, F-type ATPases have 2 components, CF(1) - the catalytic core - and CF(0) - the membrane proton channel. CF(1) has five subunits: alpha(3), beta(3), gamma(1), delta(1), epsilon(1). CF(0) has three main subunits: a(1), b(2) and c(9-12). The alpha and beta chains form an alternating ring which encloses part of the gamma chain. CF(1) is attached to CF(0) by a central stalk formed by the gamma and epsilon chains, while a peripheral stalk is formed by the delta and b chains.

It is found in the cell membrane. The catalysed reaction is ATP + H2O + 4 H(+)(in) = ADP + phosphate + 5 H(+)(out). Its function is as follows. Produces ATP from ADP in the presence of a proton gradient across the membrane. The alpha chain is a regulatory subunit. The polypeptide is ATP synthase subunit alpha (Clostridium kluyveri (strain ATCC 8527 / DSM 555 / NBRC 12016 / NCIMB 10680 / K1)).